The following is a 235-amino-acid chain: Vacuolar protein sorting-associated protein 60.1 (235 aa).

Positions 1-29 are disordered; sequence MRRVFGAKKNTEPPPSIQDASDRINKRGD. The segment covering 20–29 has biased composition (basic and acidic residues); the sequence is ASDRINKRGD. A coiled-coil region spans residues 99 to 148; that stretch reads LKDAQQTMTALKSANKELKGMMKTVKIQDIDNLQDEMMDLMDVSSEIQES. Residues 175 to 235 form a disordered region; the sequence is MGNETEADGM…PAVPRASLRG (61 aa).

It belongs to the SNF7 family. In terms of assembly, interacts with SKD1/VPS4 and LIP5. Interacts with VPS2.2.

It is found in the endosome. Its subcellular location is the multivesicular body membrane. Probable peripherally associated component of the endosomal sorting required for transport complex III (ESCRT-III) which is involved in multivesicular bodies (MVBs) formation and sorting of endosomal cargo proteins into MVBs. This is Vacuolar protein sorting-associated protein 60.1 from Arabidopsis thaliana (Mouse-ear cress).